Here is a 407-residue protein sequence, read N- to C-terminus: Cysteine desulfurase (407 aa).

An N6-(pyridoxal phosphate)lysine modification is found at lysine 226. Catalysis depends on cysteine 364, which acts as the Cysteine persulfide intermediate.

It belongs to the class-V pyridoxal-phosphate-dependent aminotransferase family. Csd subfamily. Homodimer. Interacts with SufE and the SufBCD complex composed of SufB, SufC and SufD. The interaction with SufE is required to mediate the direct transfer of the sulfur atom from the S-sulfanylcysteine. Pyridoxal 5'-phosphate is required as a cofactor.

The protein resides in the cytoplasm. The enzyme catalyses (sulfur carrier)-H + L-cysteine = (sulfur carrier)-SH + L-alanine. It carries out the reaction L-selenocysteine + AH2 = hydrogenselenide + L-alanine + A + H(+). The protein operates within cofactor biosynthesis; iron-sulfur cluster biosynthesis. Its function is as follows. Cysteine desulfurases mobilize the sulfur from L-cysteine to yield L-alanine, an essential step in sulfur metabolism for biosynthesis of a variety of sulfur-containing biomolecules. Component of the suf operon, which is activated and required under specific conditions such as oxidative stress and iron limitation. Acts as a potent selenocysteine lyase in vitro, that mobilizes selenium from L-selenocysteine. Selenocysteine lyase activity is however unsure in vivo. The chain is Cysteine desulfurase from Pectobacterium atrosepticum (strain SCRI 1043 / ATCC BAA-672) (Erwinia carotovora subsp. atroseptica).